Here is a 557-residue protein sequence, read N- to C-terminus: 2-succinyl-5-enolpyruvyl-6-hydroxy-3-cyclohexene-1-carboxylate synthase (557 aa).

It belongs to the TPP enzyme family. MenD subfamily. Homodimer. The cofactor is Mg(2+). Mn(2+) serves as cofactor. Thiamine diphosphate is required as a cofactor.

It catalyses the reaction isochorismate + 2-oxoglutarate + H(+) = 5-enolpyruvoyl-6-hydroxy-2-succinyl-cyclohex-3-ene-1-carboxylate + CO2. It participates in quinol/quinone metabolism; 1,4-dihydroxy-2-naphthoate biosynthesis; 1,4-dihydroxy-2-naphthoate from chorismate: step 2/7. The protein operates within quinol/quinone metabolism; menaquinone biosynthesis. Functionally, catalyzes the thiamine diphosphate-dependent decarboxylation of 2-oxoglutarate and the subsequent addition of the resulting succinic semialdehyde-thiamine pyrophosphate anion to isochorismate to yield 2-succinyl-5-enolpyruvyl-6-hydroxy-3-cyclohexene-1-carboxylate (SEPHCHC). The protein is 2-succinyl-5-enolpyruvyl-6-hydroxy-3-cyclohexene-1-carboxylate synthase of Staphylococcus aureus (strain Mu3 / ATCC 700698).